Reading from the N-terminus, the 517-residue chain is Cytochrome P450 monooxygenase ausI (517 aa).

Residues 8–28 (LAPLGQPWIAGLVVVSAVLYL) form a helical membrane-spanning segment. Residue Cys-457 participates in heme binding.

The protein belongs to the cytochrome P450 family. The cofactor is heme.

It is found in the membrane. The protein operates within secondary metabolite biosynthesis; terpenoid biosynthesis. In terms of biological role, cytochrome P450 monooxygenase; part of the gene cluster that mediates the biosynthesis of calidodehydroaustin, a fungal meroterpenoid. The first step of the pathway is the synthesis of 3,5-dimethylorsellinic acid by the polyketide synthase ausA. 3,5-dimethylorsellinic acid is then prenylated by the polyprenyl transferase ausN. Further epoxidation by the FAD-dependent monooxygenase ausM and cyclization by the probable terpene cyclase ausL lead to the formation of protoaustinoid A. Protoaustinoid A is then oxidized to spiro-lactone preaustinoid A3 by the combined action of the FAD-binding monooxygenases ausB and ausC, and the dioxygenase ausE. Acid-catalyzed keto-rearrangement and ring contraction of the tetraketide portion of preaustinoid A3 by ausJ lead to the formation of preaustinoid A4. The aldo-keto reductase ausK, with the help of ausH, is involved in the next step by transforming preaustinoid A4 into isoaustinone which is in turn hydroxylated by the P450 monooxygenase ausI to form austinolide. The cytochrome P450 monooxygenase ausG modifies austinolide to austinol. Austinol is further acetylated to austin by the O-acetyltransferase ausP, which spontaneously changes to dehydroaustin. The cytochrome P450 monooxygenase ausR then converts dehydroaustin is into 7-dehydrodehydroaustin. The hydroxylation catalyzed by ausR permits the O-acetyltransferase ausQ to add an additional acetyl group to the molecule, leading to the formation of acetoxydehydroaustin. The short chain dehydrogenase ausT catalyzes the reduction of the double bond present between carbon atoms 1 and 2 to convert 7-dehydrodehydroaustin into 1,2-dihydro-7-hydroxydehydroaustin. AusQ catalyzes not only an acetylation reaction but also the addition of the PKS ausV diketide product to 1,2-dihydro-7-hydroxydehydroaustin, forming precalidodehydroaustin. Finally, the iron/alpha-ketoglutarate-dependent dioxygenase converts precalidodehydroaustin into calidodehydroaustin. This Aspergillus calidoustus protein is Cytochrome P450 monooxygenase ausI.